The sequence spans 449 residues: tRNA-2-methylthio-N(6)-dimethylallyladenosine synthase (449 aa).

One can recognise an MTTase N-terminal domain in the interval 3 to 118; that stretch reads KKVFVKTFGC…LPELLAQREA (116 aa). [4Fe-4S] cluster-binding residues include cysteine 12, cysteine 49, cysteine 81, cysteine 155, cysteine 159, and cysteine 162. In terms of domain architecture, Radical SAM core spans 141 to 376; that stretch reads RVEGASAFVS…VINANIKSIS (236 aa). A TRAM domain is found at 377–440; sequence ESRVGTVQRI…AYTLRGEVVT (64 aa).

This sequence belongs to the methylthiotransferase family. MiaB subfamily. Monomer. [4Fe-4S] cluster serves as cofactor.

The protein localises to the cytoplasm. It catalyses the reaction N(6)-dimethylallyladenosine(37) in tRNA + (sulfur carrier)-SH + AH2 + 2 S-adenosyl-L-methionine = 2-methylsulfanyl-N(6)-dimethylallyladenosine(37) in tRNA + (sulfur carrier)-H + 5'-deoxyadenosine + L-methionine + A + S-adenosyl-L-homocysteine + 2 H(+). Its function is as follows. Catalyzes the methylthiolation of N6-(dimethylallyl)adenosine (i(6)A), leading to the formation of 2-methylthio-N6-(dimethylallyl)adenosine (ms(2)i(6)A) at position 37 in tRNAs that read codons beginning with uridine. This is tRNA-2-methylthio-N(6)-dimethylallyladenosine synthase from Paracidovorax citrulli (strain AAC00-1) (Acidovorax citrulli).